The primary structure comprises 357 residues: Elongation factor Ts (357 aa).

Positions 82–85 are involved in Mg(2+) ion dislocation from EF-Tu; that stretch reads TDFV.

Belongs to the EF-Ts family.

The protein localises to the cytoplasm. In terms of biological role, associates with the EF-Tu.GDP complex and induces the exchange of GDP to GTP. It remains bound to the aminoacyl-tRNA.EF-Tu.GTP complex up to the GTP hydrolysis stage on the ribosome. This Campylobacter jejuni subsp. jejuni serotype O:6 (strain 81116 / NCTC 11828) protein is Elongation factor Ts.